The sequence spans 482 residues: Catalase easC (482 aa).

H58 is an active-site residue. Heme is bound at residue Y347.

This sequence belongs to the catalase family. Heme serves as cofactor.

Its pathway is alkaloid biosynthesis; ergot alkaloid biosynthesis. Catalase; part of the gene cluster that mediates the biosynthesis of fungal ergot alkaloid. DmaW catalyzes the first step of ergot alkaloid biosynthesis by condensing dimethylallyl diphosphate (DMAP) and tryptophan to form 4-dimethylallyl-L-tryptophan. The second step is catalyzed by the methyltransferase easF that methylates 4-dimethylallyl-L-tryptophan in the presence of S-adenosyl-L-methionine, resulting in the formation of 4-dimethylallyl-L-abrine. The catalase easC and the FAD-dependent oxidoreductase easE then transform 4-dimethylallyl-L-abrine to chanoclavine-I which is further oxidized by easD in the presence of NAD(+), resulting in the formation of chanoclavine-I aldehyde. Chanoclavine-I aldehyde is the precursor of ergoamides and ergopeptines in Clavicipitaceae, and clavine-type alcaloids such as fumiclavine in Trichocomaceae. However, the metabolites downstream of chanoclavine-I aldehyde in Arthrodermataceae have not been identified yet. The chain is Catalase easC from Arthroderma otae (strain ATCC MYA-4605 / CBS 113480) (Microsporum canis).